Reading from the N-terminus, the 196-residue chain is 7-methyl-GTP pyrophosphatase (196 aa).

The Proton acceptor role is filled by aspartate 72.

Belongs to the Maf family. YceF subfamily. A divalent metal cation serves as cofactor.

It localises to the cytoplasm. The enzyme catalyses N(7)-methyl-GTP + H2O = N(7)-methyl-GMP + diphosphate + H(+). In terms of biological role, nucleoside triphosphate pyrophosphatase that hydrolyzes 7-methyl-GTP (m(7)GTP). May have a dual role in cell division arrest and in preventing the incorporation of modified nucleotides into cellular nucleic acids. In Neisseria gonorrhoeae (strain ATCC 700825 / FA 1090), this protein is 7-methyl-GTP pyrophosphatase.